The sequence spans 476 residues: Protein transport protein Sec61 subunit alpha isoform 1 (476 aa).

The Cytoplasmic segment spans residues 1-33; the sequence is MAIKFLEVIKPFCVILPEIQKPERKIQFKEKVL. Residues 34–53 form a helical membrane-spanning segment; it reads WTAITLFIFLVCCQIPLFGI. The Lumenal portion of the chain corresponds to 54–76; the sequence is MSSDSADPFYWMRVILASNRGTL. A helical transmembrane segment spans residues 77 to 96; sequence MELGISPIVTSGLIMQLLAG. At 97–117 the chain is on the cytoplasmic side; the sequence is AKIIEVGDTPKDRALFNGAQK. The chain crosses the membrane as a helical span at residues 118 to 138; the sequence is LFGMIITIGQSIVYVMTGMYG. Topologically, residues 139–144 are lumenal; sequence DPSEMG. Residues 145–165 form a helical membrane-spanning segment; the sequence is AGICLLITIQLFVAGLIVLLL. At 166–172 the chain is on the cytoplasmic side; sequence DELLQKG. Residues 173–193 form a helical membrane-spanning segment; that stretch reads YGLGSGISLFIATNICETIVW. At 194–240 the chain is on the lumenal side; it reads KAFSPTTVNTGRGMEFEGAIIALFHLLATRTDKVRALREAFYRQNLP. The chain crosses the membrane as a helical span at residues 241 to 261; that stretch reads NLMNLIATIFVFAVVIYFQGF. Topologically, residues 262–288 are cytoplasmic; it reads RVDLPIKSARYRGQYNTYPIKLFYTSN. The helical transmembrane segment at 289-309 threads the bilayer; sequence IPIILQSALVSNLYVISQMLS. Residues 310 to 354 are Lumenal-facing; it reads ARFSGNLLVSLLGTWSDTSSGGPARAYPVGGLCYYLSPPESFGSV. Residues 355 to 375 form a helical membrane-spanning segment; the sequence is LEDPVHAVVYIVFMLGSCAFF. Residues 376 to 420 lie on the Cytoplasmic side of the membrane; the sequence is SKTWIEVSGSSAKDVAKQLKEQQMVMRGHRETSMVHELNRYIPTA. Residues 421–441 traverse the membrane as a helical segment; sequence AAFGGLCIGALSVLADFLGAI. The Lumenal segment spans residues 442 to 445; that stretch reads GSGT. The chain crosses the membrane as a helical span at residues 446 to 462; sequence GILLAVTIIYQYFEIFV. The Cytoplasmic segment spans residues 463–476; that stretch reads KEQSEVGSMGALLF.

It belongs to the SecY/SEC61-alpha family. The SEC61 channel-forming translocon complex consists of channel-forming core components SEC61A1, SEC61B and SEC61G and different auxiliary components such as SEC62 and SEC63. The SEC61 channel associates with the multi-pass translocon (MPT) complex. In terms of tissue distribution, expressed in proximal and distal tubules in kidney (at protein level).

It localises to the endoplasmic reticulum membrane. Its function is as follows. Component of SEC61 channel-forming translocon complex that mediates transport of signal peptide-containing precursor polypeptides across the endoplasmic reticulum (ER). Forms a ribosome receptor and a gated pore in the ER membrane, both functions required for cotranslational translocation of nascent polypeptides. May cooperate with auxiliary protein SEC62, SEC63 and HSPA5/BiP to enable post-translational transport of small presecretory proteins. The SEC61 channel is also involved in ER membrane insertion of transmembrane proteins: it mediates membrane insertion of the first few transmembrane segments of proteins, while insertion of subsequent transmembrane regions of multi-pass membrane proteins is mediated by the multi-pass translocon (MPT) complex. The SEC61 channel cooperates with the translocating protein TRAM1 to import nascent proteins into the ER. Controls the passive efflux of calcium ions from the ER lumen to the cytosol through SEC61 channel, contributing to the maintenance of cellular calcium homeostasis. Plays a critical role in nephrogenesis, specifically at pronephros stage. In Homo sapiens (Human), this protein is Protein transport protein Sec61 subunit alpha isoform 1 (SEC61A1).